Consider the following 131-residue polypeptide: Small ribosomal subunit protein uS8 (131 aa).

The protein belongs to the universal ribosomal protein uS8 family. As to quaternary structure, part of the 30S ribosomal subunit. Contacts proteins S5 and S12.

Its function is as follows. One of the primary rRNA binding proteins, it binds directly to 16S rRNA central domain where it helps coordinate assembly of the platform of the 30S subunit. The sequence is that of Small ribosomal subunit protein uS8 from Acidithiobacillus ferrooxidans (strain ATCC 23270 / DSM 14882 / CIP 104768 / NCIMB 8455) (Ferrobacillus ferrooxidans (strain ATCC 23270)).